The sequence spans 229 residues: Potassium/proton antiporter CemA (229 aa).

3 helical membrane passes run 7–27 (LTPFPYLASIVFLPWGISLSF), 106–126 (LILHFSTNIICFTILSAYSIL), and 193–213 (LVSTFPVIIDTILKYWIFLFL).

This sequence belongs to the CemA family.

It is found in the plastid. The protein resides in the chloroplast inner membrane. The enzyme catalyses K(+)(in) + H(+)(out) = K(+)(out) + H(+)(in). In terms of biological role, contributes to K(+)/H(+) antiport activity by supporting proton efflux to control proton extrusion and homeostasis in chloroplasts in a light-dependent manner to modulate photosynthesis. Prevents excessive induction of non-photochemical quenching (NPQ) under continuous-light conditions. Indirectly promotes efficient inorganic carbon uptake into chloroplasts. The protein is Potassium/proton antiporter CemA of Illicium oligandrum (Star anise).